The primary structure comprises 149 residues: D-aminoacyl-tRNA deacylase (149 aa).

Positions 137–138 (GP) match the Gly-cisPro motif, important for rejection of L-amino acids motif.

It belongs to the DTD family. In terms of assembly, homodimer.

Its subcellular location is the cytoplasm. It catalyses the reaction glycyl-tRNA(Ala) + H2O = tRNA(Ala) + glycine + H(+). The catalysed reaction is a D-aminoacyl-tRNA + H2O = a tRNA + a D-alpha-amino acid + H(+). In terms of biological role, an aminoacyl-tRNA editing enzyme that deacylates mischarged D-aminoacyl-tRNAs. Also deacylates mischarged glycyl-tRNA(Ala), protecting cells against glycine mischarging by AlaRS. Acts via tRNA-based rather than protein-based catalysis; rejects L-amino acids rather than detecting D-amino acids in the active site. By recycling D-aminoacyl-tRNA to D-amino acids and free tRNA molecules, this enzyme counteracts the toxicity associated with the formation of D-aminoacyl-tRNA entities in vivo and helps enforce protein L-homochirality. This Clostridium beijerinckii (strain ATCC 51743 / NCIMB 8052) (Clostridium acetobutylicum) protein is D-aminoacyl-tRNA deacylase.